Reading from the N-terminus, the 86-residue chain is Small ribosomal subunit protein bS20 (86 aa).

Belongs to the bacterial ribosomal protein bS20 family.

Binds directly to 16S ribosomal RNA. The protein is Small ribosomal subunit protein bS20 of Buchnera aphidicola subsp. Cinara cedri (strain Cc).